A 218-amino-acid polypeptide reads, in one-letter code: MAEITAKLVKELRDKTSAGMMDCKKALIENKGDMDKSIEWLRQKGIASAEKKSGRVAAEGAVGSYIHTGSRVGVLLELNCETDFVARGDLFQGLLRDLSMQVAACPSVEYVSVDQIPESIANKEKEIEMGRDDLSGKPDQIKAKIVEGRIGKRLKEMALLEQPFIKDSSINVEELVKQVAGKIGENIRVRRFTRYILGEGIEVQGPDFAEEVASMTSG.

The interval 82–85 is involved in Mg(2+) ion dislocation from EF-Tu; sequence TDFV.

The protein belongs to the EF-Ts family.

The protein resides in the cytoplasm. Its function is as follows. Associates with the EF-Tu.GDP complex and induces the exchange of GDP to GTP. It remains bound to the aminoacyl-tRNA.EF-Tu.GTP complex up to the GTP hydrolysis stage on the ribosome. This chain is Elongation factor Ts, found in Prochlorococcus marinus (strain NATL2A).